The sequence spans 353 residues: Protein RecA (353 aa).

Residue 67–74 participates in ATP binding; sequence GPESSGKT. Residues 330–353 are disordered; the sequence is SNPNSTPDFSVDDSEGVAETNEDF. The segment covering 339–353 has biased composition (acidic residues); that stretch reads SVDDSEGVAETNEDF.

This sequence belongs to the RecA family.

Its subcellular location is the cytoplasm. Can catalyze the hydrolysis of ATP in the presence of single-stranded DNA, the ATP-dependent uptake of single-stranded DNA by duplex DNA, and the ATP-dependent hybridization of homologous single-stranded DNAs. It interacts with LexA causing its activation and leading to its autocatalytic cleavage. The protein is Protein RecA of Shigella sonnei.